A 496-amino-acid chain; its full sequence is Geranylhydroquinone 3''-hydroxylase CYP76B74 (496 aa).

The chain crosses the membrane as a helical span at residues 3–23 (YTTILVGFLIGFVLFKALTRK). C436 is a binding site for heme.

The protein belongs to the cytochrome P450 family. Requires heme as cofactor.

Its subcellular location is the endoplasmic reticulum membrane. The enzyme catalyses (2E)-geranylhydroquinone + reduced [NADPH--hemoprotein reductase] + O2 = (2Z)-3''-hydroxygeranylhydroquinone + oxidized [NADPH--hemoprotein reductase] + H2O + H(+). Its function is as follows. Hydroxylase involved in the biosynthesis pathway of the red naphthoquinone pigment shikonin. Catalyzes the key step C-3''-hydroxylation of the prenylated phenolic intermediate geranylhydroquinone to form 3''-hydroxygeranylhydroquinone. This Arnebia euchroma (Pink arnebia) protein is Geranylhydroquinone 3''-hydroxylase CYP76B74.